We begin with the raw amino-acid sequence, 215 residues long: Penicillin-binding protein activator LpoB (215 aa).

Residues 1–19 (MMKMCRYALITALAIFLAG) form the signal peptide. The N-palmitoyl cysteine moiety is linked to residue Cys-20. The S-diacylglycerol cysteine moiety is linked to residue Cys-20. The interval 28 to 78 (APVEEAKPQPQQPAQPQPTVPTVPAVPSVPAQPGPIEHQDQQSGQPAPRVR) is disordered. Over residues 37–48 (PQQPAQPQPTVP) the composition is skewed to pro residues. Low complexity predominate over residues 49–58 (TVPAVPSVPA).

Belongs to the LpoB family. Interacts with PBP1b.

It localises to the cell outer membrane. Its function is as follows. Regulator of peptidoglycan synthesis that is essential for the function of penicillin-binding protein 1B (PBP1b). This Klebsiella pneumoniae subsp. pneumoniae (strain ATCC 700721 / MGH 78578) protein is Penicillin-binding protein activator LpoB.